A 506-amino-acid polypeptide reads, in one-letter code: MKEYRVYLERARSRQQDFLYPLIFREYIYGLAYSHNFNRSIFMENGGYDNKYSLLNVKRLITRMYQQNHLIISANDSNKNPFLGYNKNFYSQIISEGFAIIVEIPFFLQLSSSLEEAEIIKSYKNVRSIHSIFPFLEDKFTYLNYVSDIRIPYPIHLEILIQILRYWVKDVPFFHLLRLFLSHFCNWNCFIPTKKSISTFSKRNPRLFLFLHNFYVCEYESIFLFLRNKSSHLRLKSFSVFFERIFFYAKRKHLVEVFSKDFSYTLPFFKDPNIHYVRYQGKCILASKNVPFLMNKWKYYFIHLWQCFFDVWSQPRTININQLSEHSFQLLGYFSNVRLNRSVVRSQMLQNTFLIEIVSKKLDIIVPIIPLIRSLAKAKFCNVLGHPISKPVWADSSDFDIIERFLRICRNLSHYYNGSSKKKSLYRIKYILRLSCIKTLACKHKSTVRAFLKRSGSEELLEEFFTEEEEILSLIFPRDSFSLRRFHRNRIWYLDILFSNDLVNDE.

Belongs to the intron maturase 2 family. MatK subfamily.

Its subcellular location is the plastid. The protein resides in the chloroplast. In terms of biological role, usually encoded in the trnK tRNA gene intron. Probably assists in splicing its own and other chloroplast group II introns. The sequence is that of Maturase K from Trifolium repens (Creeping white clover).